A 292-amino-acid chain; its full sequence is Formamidopyrimidine-DNA glycosylase (292 aa).

The active-site Schiff-base intermediate with DNA is proline 2. Glutamate 3 functions as the Proton donor in the catalytic mechanism. Residue lysine 61 is the Proton donor; for beta-elimination activity of the active site. DNA-binding residues include histidine 96, arginine 115, and lysine 161. The FPG-type zinc finger occupies 247–281; the sequence is SAYGQEDRPCPRCGTAIRREKFMNRSSFSCPKCQP. The active-site Proton donor; for delta-elimination activity is arginine 271.

This sequence belongs to the FPG family. In terms of assembly, monomer. Zn(2+) is required as a cofactor.

It catalyses the reaction Hydrolysis of DNA containing ring-opened 7-methylguanine residues, releasing 2,6-diamino-4-hydroxy-5-(N-methyl)formamidopyrimidine.. The catalysed reaction is 2'-deoxyribonucleotide-(2'-deoxyribose 5'-phosphate)-2'-deoxyribonucleotide-DNA = a 3'-end 2'-deoxyribonucleotide-(2,3-dehydro-2,3-deoxyribose 5'-phosphate)-DNA + a 5'-end 5'-phospho-2'-deoxyribonucleoside-DNA + H(+). Its function is as follows. Involved in base excision repair of DNA damaged by oxidation or by mutagenic agents. Acts as a DNA glycosylase that recognizes and removes damaged bases. Has a preference for oxidized purines, such as 7,8-dihydro-8-oxoguanine (8-oxoG). Has AP (apurinic/apyrimidinic) lyase activity and introduces nicks in the DNA strand. Cleaves the DNA backbone by beta-delta elimination to generate a single-strand break at the site of the removed base with both 3'- and 5'-phosphates. In Rhodococcus jostii (strain RHA1), this protein is Formamidopyrimidine-DNA glycosylase.